Here is a 71-residue protein sequence, read N- to C-terminus: Pro-MCH (71 aa).

A signal peptide spans 1 to 20 (AKMNLSSYILILTFSLFSQG).

Belongs to the melanin-concentrating hormone family.

It localises to the secreted. This is Pro-MCH (PMCH) from Hylobates lar (Lar gibbon).